The following is a 316-amino-acid chain: Protoheme IX farnesyltransferase (316 aa).

The next 9 helical transmembrane spans lie at 32-52, 53-73, 93-113, 116-136, 152-172, 180-200, 221-241, 252-271, and 289-309; these read VMSL…GHIH, PVLG…SGAL, IPAG…LSGF, VILG…TIFF, NIVI…ACVT, TVLF…LALF, VTKH…VLPS, LVAA…VWRM, and IFYL…PVLV.

It belongs to the UbiA prenyltransferase family. Protoheme IX farnesyltransferase subfamily.

Its subcellular location is the cell inner membrane. The catalysed reaction is heme b + (2E,6E)-farnesyl diphosphate + H2O = Fe(II)-heme o + diphosphate. The protein operates within porphyrin-containing compound metabolism; heme O biosynthesis; heme O from protoheme: step 1/1. In terms of biological role, converts heme B (protoheme IX) to heme O by substitution of the vinyl group on carbon 2 of heme B porphyrin ring with a hydroxyethyl farnesyl side group. The protein is Protoheme IX farnesyltransferase of Rhizobium johnstonii (strain DSM 114642 / LMG 32736 / 3841) (Rhizobium leguminosarum bv. viciae).